The following is a 304-amino-acid chain: Probable cobalamin biosynthesis protein CobD (304 aa).

The next 5 helical transmembrane spans lie at 2–22 (IVVL…KEYI), 50–70 (ILFS…AVYL), 73–93 (FILV…FSIT), 147–167 (VDGY…GAFI), and 284–304 (AAYS…AVFL).

Belongs to the CobD/CbiB family.

The protein resides in the cell membrane. It participates in cofactor biosynthesis; adenosylcobalamin biosynthesis. Converts cobyric acid to cobinamide by the addition of aminopropanol on the F carboxylic group. The sequence is that of Probable cobalamin biosynthesis protein CobD from Thermoplasma volcanium (strain ATCC 51530 / DSM 4299 / JCM 9571 / NBRC 15438 / GSS1).